We begin with the raw amino-acid sequence, 312 residues long: Acetyl-coenzyme A carboxylase carboxyl transferase subunit beta (312 aa).

The CoA carboxyltransferase N-terminal domain maps to 24–293 (LWIKCPDSGQ…VEHAKPAPQL (270 aa)). The interval 286 to 312 (HAKPAPQLPPPAKPAETAEAPAVATSA) is disordered. Residues 299–312 (PAETAEAPAVATSA) are compositionally biased toward low complexity.

The protein belongs to the AccD/PCCB family. In terms of assembly, acetyl-CoA carboxylase is a heterohexamer composed of biotin carboxyl carrier protein (AccB), biotin carboxylase (AccC) and two subunits each of ACCase subunit alpha (AccA) and ACCase subunit beta (AccD).

The protein resides in the cytoplasm. The catalysed reaction is N(6)-carboxybiotinyl-L-lysyl-[protein] + acetyl-CoA = N(6)-biotinyl-L-lysyl-[protein] + malonyl-CoA. It participates in lipid metabolism; malonyl-CoA biosynthesis; malonyl-CoA from acetyl-CoA: step 1/1. Component of the acetyl coenzyme A carboxylase (ACC) complex. Biotin carboxylase (BC) catalyzes the carboxylation of biotin on its carrier protein (BCCP) and then the CO(2) group is transferred by the transcarboxylase to acetyl-CoA to form malonyl-CoA. This is Acetyl-coenzyme A carboxylase carboxyl transferase subunit beta from Bradyrhizobium sp. (strain ORS 278).